Consider the following 252-residue polypeptide: ATP synthase subunit a (252 aa).

Helical transmembrane passes span 6–26, 31–51, 88–108, 117–137, 144–164, 190–212, and 225–245; these read LEQFAIIQLIPIHIGNLYFSF, LFMLLTISLVLLLVHFVTLNG, FFPLIYVTFTFLLFCNLIGMI, HFIITLGLSFSLFIGITIVGF, FFSILLPQGVPLPLAPFLVLL, LVKILSGFAWTMLSMGGILYLGQ, and LELGVAILQAYVFTILLCIYL.

This sequence belongs to the ATPase A chain family. F-type ATPases have 2 components, CF(1) - the catalytic core - and CF(0) - the membrane proton channel. CF(1) has five subunits: alpha(3), beta(3), gamma(1), delta(1), epsilon(1). CF(0) has three main subunits: a, b and c.

The protein localises to the mitochondrion inner membrane. Functionally, mitochondrial membrane ATP synthase (F(1)F(0) ATP synthase or Complex V) produces ATP from ADP in the presence of a proton gradient across the membrane which is generated by electron transport complexes of the respiratory chain. F-type ATPases consist of two structural domains, F(1) - containing the extramembraneous catalytic core and F(0) - containing the membrane proton channel, linked together by a central stalk and a peripheral stalk. During catalysis, ATP synthesis in the catalytic domain of F(1) is coupled via a rotary mechanism of the central stalk subunits to proton translocation. Key component of the proton channel; it may play a direct role in the translocation of protons across the membrane. This is ATP synthase subunit a (ATP6) from Marchantia polymorpha (Common liverwort).